The following is a 526-amino-acid chain: Probable inorganic phosphate transporter 1-3 (526 aa).

The Cytoplasmic portion of the chain corresponds to 1-21; sequence MADGQLKVLTTLDHARTQWYH. Residues 22–42 traverse the membrane as a helical segment; it reads FMAIVIAGMGFFTDAYDLFCI. Residues 43–70 are Extracellular-facing; it reads SLVSKLLGRIYYTDLAGDNPGSLPPNVS. The helical transmembrane segment at 71–91 threads the bilayer; it reads AAVNGVALCGTLAGQLFFGWL. Residues 92-99 lie on the Cytoplasmic side of the membrane; that stretch reads GDKLGRKS. A helical membrane pass occupies residues 100–120; it reads VYGFTLVLMVVCSVASGLSFG. Residues 121–124 lie on the Extracellular side of the membrane; sequence RTAK. The chain crosses the membrane as a helical span at residues 125–145; sequence GVVATLCFFRFWLGFGIGGDY. Topologically, residues 146–163 are cytoplasmic; the sequence is PLSATIMSEYANKRTRGA. A helical membrane pass occupies residues 164–184; sequence FIAAVFAMQGFGILFGAIVAL. Residues 185–211 are Extracellular-facing; that stretch reads VVSAGFRNAYPAPSYADGRAASLVPEA. The chain crosses the membrane as a helical span at residues 212–232; sequence DYVWRIILMFGTVPAALTYYW. Residues 233–294 are Cytoplasmic-facing; it reads RMKMPETARY…GLFSRQFVRR (62 aa). The helical transmembrane segment at 295–315 threads the bilayer; the sequence is HGVHLVATTSTWFLLDIAFYS. Residues 316-349 lie on the Extracellular side of the membrane; it reads QNLFQKDIFSKVGWIPPARTMNAVEEVFRIARAQ. Residues 350–370 form a helical membrane-spanning segment; the sequence is ALIALCGTIPGYWFTVAFIDV. Topologically, residues 371-373 are cytoplasmic; it reads AGR. A helical transmembrane segment spans residues 374-394; the sequence is FAIQLMGFAMMTVFMLGLAAP. At 395 to 407 the chain is on the extracellular side; the sequence is YHHWTTPGNHTGF. A helical transmembrane segment spans residues 408-428; it reads VVMYGFTFFFANFGPNATTFI. At 429–444 the chain is on the cytoplasmic side; sequence VPAEIYPARLRSTCHG. The helical transmembrane segment at 445 to 465 threads the bilayer; it reads ISAAAGKAGAIVGAFGFLYAA. Topologically, residues 466–483 are extracellular; that stretch reads QDPHKPEAGYKPGIGIRN. A helical membrane pass occupies residues 484–504; it reads ALFVLAGTNFLGMLMTLLVPE. Residues 505-526 lie on the Cytoplasmic side of the membrane; sequence SKGMSLEEVSKENVADDEEATA.

The protein belongs to the major facilitator superfamily. Phosphate:H(+) symporter (TC 2.A.1.9) family. Expressed at low levels in roots.

It localises to the membrane. Functionally, high-affinity transporter for external inorganic phosphate. The polypeptide is Probable inorganic phosphate transporter 1-3 (PHT1-3) (Oryza sativa subsp. japonica (Rice)).